Reading from the N-terminus, the 504-residue chain is Zinc finger protein AEBP2 (504 aa).

Residues 1 to 219 are disordered; sequence MAAALADMAD…SRMDSEDSIS (219 aa). Ala-2 is modified (N-acetylalanine). Over residues 16 to 30 the composition is skewed to low complexity; the sequence is RLSPLSPGSPGPAAR. Phosphoserine is present on residues Ser-18, Ser-21, and Ser-24. Over residues 36-49 the composition is skewed to acidic residues; the sequence is PEEEEEEDDEEAEA. The segment covering 59 to 69 has biased composition (gly residues); it reads GGAGGGAGGGE. Residues 86 to 110 show a composition bias toward acidic residues; sequence GDEDEDEEDDEDEGSSSGGAEEESS. The segment covering 129–140 has biased composition (low complexity); it reads SLSPGAASSSSG. Ser-131 is modified (phosphoserine). Positions 142–153 are enriched in basic and acidic residues; the sequence is GDGKEGLEEPKG. Composition is skewed to gly residues over residues 154 to 168 and 178 to 189; these read PRGGPGGPGSSGGGS and GDEGYGTGGGGS. Residues Ser-199, Ser-203, and Ser-204 each carry the phosphoserine modification. Positions 202–287 are interaction with RBBP4; that stretch reads MSSDGEPLSR…IHVDGQRGGV (86 aa). The C2H2-type 1 zinc finger occupies 254 to 279; the sequence is YNCCWDQCQACFNSSPDLADHIRSIH. The segment at 293–315 adopts a C2H2-type 2; degenerate zinc-finger fold; the sequence is KGCKVYNTPSTSQSWLQRHMLTH. The segment at 321-345 adopts a C2H2-type 3 zinc-finger fold; sequence FKCVVGGCNASFASQGGLARHVPTH. Polar residues predominate over residues 345-358; that stretch reads HFSQQNSSKVSSQP. Positions 345–387 are disordered; that stretch reads HFSQQNSSKVSSQPKAKEESPSKAGMNKRRKLKNKRRRSLPRP. Basic residues predominate over residues 370–385; that stretch reads MNKRRKLKNKRRRSLP. Ser-383 carries the phosphoserine modification. The interaction with SUZ12 stretch occupies residues 400–471; sequence RHRAICFNLS…QLKTKVVHLS (72 aa). Residues 488 to 504 form an important for nucleosome binding activity of the PRC2 complex region; it reads TMPQKRLKRFDILNFPR.

This sequence belongs to the AEBP2/jing C2H2-type zinc-finger family. Self-associates. Associates with the PRC2 complex, which consists of the core components EED, EZH1 or EZH2, SUZ12, and RBBP4, and various combinations of accessory subunits including AEBP2, JARID2, PHF19, MTF2 and EPOP. Found in a monomeric PRC2.2 (class 2) complex consisting of at least SUZ12, RBBP4, AEBP2 and JARID2. Within the PRC2 complex, interacts directly with SUZ12; competes with PHF19 for SUZ12 binding. Interacts with EED, EZH2, and RBBP4. May also interact with RBBP7. In terms of tissue distribution, expressed in brain, brown adipose tissue, white adipose tissue, heart, kidney, lung, skeletal muscle, small intestine and spleen. Expressed at low levels in liver.

The protein localises to the nucleus. Acts as an accessory subunit for the core Polycomb repressive complex 2 (PRC2), which mediates histone H3K27 (H3K27me3) trimethylation on chromatin leading to transcriptional repression of the affected target gene. Plays a role in nucleosome localization of the PRC2 complex. The polypeptide is Zinc finger protein AEBP2 (Aebp2) (Mus musculus (Mouse)).